We begin with the raw amino-acid sequence, 467 residues long: ATP-dependent protease ATPase subunit HslU (467 aa).

ATP is bound by residues Val22 and 64-69; that span reads GVGKTE. Residues 166 to 185 are disordered; the sequence is GQNQDEEEEPPTEEIKTKRS. ATP contacts are provided by Asp280, Glu345, and Arg417.

The protein belongs to the ClpX chaperone family. HslU subfamily. As to quaternary structure, a double ring-shaped homohexamer of HslV is capped on each side by a ring-shaped HslU homohexamer. The assembly of the HslU/HslV complex is dependent on binding of ATP.

It is found in the cytoplasm. Its function is as follows. ATPase subunit of a proteasome-like degradation complex; this subunit has chaperone activity. The binding of ATP and its subsequent hydrolysis by HslU are essential for unfolding of protein substrates subsequently hydrolyzed by HslV. HslU recognizes the N-terminal part of its protein substrates and unfolds these before they are guided to HslV for hydrolysis. This is ATP-dependent protease ATPase subunit HslU from Staphylococcus epidermidis (strain ATCC 35984 / DSM 28319 / BCRC 17069 / CCUG 31568 / BM 3577 / RP62A).